Here is a 1790-residue protein sequence, read N- to C-terminus: Intracellular protein transport protein USO1 (1790 aa).

The tract at residues 1 to 724 (MDIIQGLIQQ…LSHDPDEEPI (724 aa)) is globular head. 10 ARM repeats span residues 45 to 89 (AFSR…LFIR), 127 to 170 (QFSL…AVMA), 173 to 213 (PLKA…MAVV), 215 to 260 (DSPH…NILK), 261 to 312 (YNTS…VSLT), 314 to 362 (EPGN…NMVR), 363 to 429 (SNEH…LKAY), 431 to 512 (MDNF…PFKL), 543 to 584 (GNDL…LIYW), and 586 to 630 (FGDF…LGVA). The disordered stretch occupies residues 452-484 (TNNVGDNAKENGGSNKSDKESDSDKDTDGKDGT). The tract at residues 465–487 (SNKSDKESDSDKDTDGKDGTEYE) is charged (hyper-hydrophilic). Basic and acidic residues predominate over residues 467-484 (KSDKESDSDKDTDGKDGT). The stretch at 725 to 1790 (NKISFEEVEK…EEDEEEGQVA (1066 aa)) forms a coiled coil. The interval 991-1790 (ESSIQLSNLQ…EEDEEEGQVA (800 aa)) is dispensable for the protein function. Disordered regions lie at residues 1185–1221 (EITSTQQENESIKKKNDELEGEVKAMKSTSEEQSNLK), 1326–1351 (KEKSESELSRLKKTSSEERKNAEEQL), 1485–1547 (GLKK…EDIK), 1645–1667 (QELDSTQQKAQKSEEERRAEVRK), 1722–1742 (DNLKAENSKLKEANEDRSEID), and 1762–1790 (LKDLGVEISSDEEDDEEDDEEDEEEGQVA). Over residues 1194 to 1209 (ESIKKKNDELEGEVKA) the composition is skewed to basic and acidic residues. Composition is skewed to basic and acidic residues over residues 1485-1512 (GLKKLEEESSKEKAELEKSKEMMKKLES), 1519-1547 (TELKSSMETIRKSDEKLEQSKKSAEEDIK), 1655-1667 (QKSEEERRAEVRK), and 1722-1738 (DNLKAENSKLKEANEDR). S1770 is modified (phosphoserine). A compositionally biased stretch (acidic residues) spans 1770–1790 (SSDEEDDEEDDEEDEEEGQVA).

It belongs to the VDP/USO1/EDE1 family. In terms of assembly, homodimer. Dimerizes by parallel association of the tails, resulting in an elongated structure with two globular head domains side by side, and a long rod-like tail structure.

The protein resides in the cytoplasm. It is found in the cytoskeleton. Its subcellular location is the cytoplasmic vesicle membrane. It localises to the endoplasmic reticulum membrane. The protein localises to the golgi apparatus membrane. Required for protein transport from the ER to the Golgi complex. The sequence is that of Intracellular protein transport protein USO1 (USO1) from Saccharomyces cerevisiae (strain ATCC 204508 / S288c) (Baker's yeast).